The primary structure comprises 423 residues: Putative competence-damage inducible protein (423 aa).

Belongs to the CinA family.

This chain is Putative competence-damage inducible protein, found in Streptococcus pyogenes serotype M3 (strain ATCC BAA-595 / MGAS315).